A 117-amino-acid chain; its full sequence is Large ribosomal subunit protein bL20c (117 aa).

It belongs to the bacterial ribosomal protein bL20 family.

It localises to the plastid. The protein resides in the chloroplast. Binds directly to 23S ribosomal RNA and is necessary for the in vitro assembly process of the 50S ribosomal subunit. It is not involved in the protein synthesizing functions of that subunit. The sequence is that of Large ribosomal subunit protein bL20c (rpl20) from Bigelowiella natans (Pedinomonas minutissima).